A 908-amino-acid chain; its full sequence is MNDQTQFTERALTILTLAQKLASDHQHPQLQPIHILAAFIETPEDGSVPYLQNLIEKGRYDYDLFKKVVNRNLVRIPQQQPAPAEITPSYALGKVLQDAAKIQKQQKDSFIAQDHILFALFNDSSIQQIFKEAQVDIEAIKQQALELRGNTRIDSRGADTNTPLEYLSKYAIDMTEQARQGKLDPVIGREEEIRSTIRVLARRIKSNPCLIGEPGIGKTAIIEGVAQRIIDDDVPTILQGAKLFSLDLAALTAGAKYKGDFEERFKGVLKEIEESKTLIVLFIDEIHMLMGNGKDDAANILKPALSRGQLKVIGATTNNEYRSIVEKDGAFERRFQKIEVAEPSVRQTVAILRGLQPKYEIHHGVRILDSALVTAAQLAKRYLPYRRLPDSALDLVDISCAGVAVARDSKPEELDSKERQLQLIQVEIKALERDEDADSTTKDRLKLARQKEASLQEELEPLRQRYNEEKHGHEELTQAKKKLDELENKALDAERRYDTATAADLRYFAIPDIKKQIEKLEDQVAEEERRAGANSMIQNVVDSDTISETAARLTGIPVKKLSESENEKLIHMERDLSSEVVGQMDAIKAVSNAVRLSRSGLANPRQPASFLFLGLSGSGKTELAKKVAGFLFNDEDMMIRVDCSELSEKYAVSKLLGTTAGYVGYDEGGFLTNQLQYKPYSVLLFDEVEKAHPDVLTVMLQMLDDGRITSGQGKTIDCSNCIVIMTSNLGAEFINSQQGSKIQESTKNLVMGAVRQHFRPEFLNRISSIVIFNKLSRKAIHKIVDIRLKEIEERFEQNDKHYKLNLTQEAKDFLAKYGYSDDMGARPLNRLIQNEILNKLALRILKNEIKDKETVNVVLKKGKSRDENVPEEAEECLEVLPNHEATIGADTLGDDDNEDSMEIDDDLD.

M1 carries the N-acetylmethionine modification. The 147-residue stretch at Q4 to N150 folds into the Clp R domain. 2 repeat regions span residues F7–I76 and P88–N150. The tract at residues L167–P411 is NBD1. S206 is modified (phosphoserine). G212–T219 contacts ATP. S306 carries the post-translational modification Phosphoserine. Positions E412–M536 form a coiled coil. K442 is covalently cross-linked (Glycyl lysine isopeptide (Lys-Gly) (interchain with G-Cter in ubiquitin)). Phosphothreonine is present on T499. Phosphoserine is present on S535. The tract at residues V541–A731 is NBD2. G614–T621 is an ATP binding site. K620 participates in a covalent cross-link: Glycyl lysine isopeptide (Lys-Gly) (interchain with G-Cter in ubiquitin). The short motif at N773–K789 is the Nuclear localization signal element. Positions H883–D908 are disordered. Residues L892 to D908 are compositionally biased toward acidic residues. An interaction surface for TPR repeats region spans residues D905–D908.

The protein belongs to the ClpA/ClpB family. In terms of assembly, homohexamer, forming a ring with a central pore. The hexamer is stabilized by high protein concentrations and by ADP or ATP. Oligomerization influences ATP hydrolysis activity at NBD2. Interacts with YDJ1. Interacts (via C-terminal DDLD tetrapeptide) with CNS1, CPR7 and STI1 (via TPR repeats); under respiratory growth conditions.

It localises to the cytoplasm. Its subcellular location is the nucleus. Its activity is regulated as follows. Inhibited by micromolar concentrations of guanidinium chloride. Inhibits the ATPase activity, but does not dissociate the hexameric protein. In terms of biological role, required, in concert with Hsp40 (YDJ1) and Hsp70 (SSA1) and small Hsps (HSP26), for the dissociation, resolubilization and refolding of aggregates of damaged proteins after heat or other environmental stresses. Extracts proteins from aggregates by unfolding and threading them in an ATP-dependent process through the axial channel of the protein hexamer, after which they can be refolded by components of the Hsp70/Hsp40 chaperone system. Substrate binding is ATP-dependent, and release of bound polypeptide is triggered by ATP hydrolysis. Also responsible for the maintenance of prions by dissociating prion fibrils into smaller oligomers, thereby producing transmissible seeds that can infect daughter cells during mitosis and meiosis. Loss of HSP104 can cure yeast cells of the prions [PSI+], [URE3] and [PIN+]. Excess HSP104 can also specifically cure cells of [PSI+]. This Saccharomyces cerevisiae (strain ATCC 204508 / S288c) (Baker's yeast) protein is Heat shock protein 104 (HSP104).